The chain runs to 77 residues: Cysteine-rich protein 1 (77 aa).

Residues Pro2–Pro63 enclose the LIM zinc-binding domain. 2 positions are modified to N6-acetyllysine: Lys9 and Lys22. Arg68 is subject to Omega-N-methylarginine.

Seems to have a role in zinc absorption and may function as an intracellular zinc transport protein. The polypeptide is Cysteine-rich protein 1 (CRIP1) (Bos taurus (Bovine)).